The following is an 88-amino-acid chain: UPF0297 protein SAK_2030 (88 aa).

The protein belongs to the UPF0297 family.

The protein is UPF0297 protein SAK_2030 of Streptococcus agalactiae serotype Ia (strain ATCC 27591 / A909 / CDC SS700).